The sequence spans 444 residues: Phosphoglucosamine mutase (444 aa).

S101 serves as the catalytic Phosphoserine intermediate. Residues S101, D240, D242, and D244 each contribute to the Mg(2+) site. Phosphoserine is present on S101.

This sequence belongs to the phosphohexose mutase family. The cofactor is Mg(2+). Activated by phosphorylation.

The catalysed reaction is alpha-D-glucosamine 1-phosphate = D-glucosamine 6-phosphate. Functionally, catalyzes the conversion of glucosamine-6-phosphate to glucosamine-1-phosphate. The polypeptide is Phosphoglucosamine mutase (Sphingopyxis alaskensis (strain DSM 13593 / LMG 18877 / RB2256) (Sphingomonas alaskensis)).